The primary structure comprises 209 residues: Proteasome subunit beta (209 aa).

The propeptide at 1 to 10 is removed in mature form; by autocatalysis; sequence MVEQSDTMKG. Residue Thr-11 is the Nucleophile of the active site.

The protein belongs to the peptidase T1B family. The 20S proteasome core is composed of 14 alpha and 14 beta subunits that assemble into four stacked heptameric rings, resulting in a barrel-shaped structure. The two inner rings, each composed of seven catalytic beta subunits, are sandwiched by two outer rings, each composed of seven alpha subunits. The catalytic chamber with the active sites is on the inside of the barrel. Has a gated structure, the ends of the cylinder being occluded by the N-termini of the alpha-subunits. Is capped at one or both ends by the proteasome regulatory ATPase, PAN.

The protein resides in the cytoplasm. The enzyme catalyses Cleavage of peptide bonds with very broad specificity.. With respect to regulation, the formation of the proteasomal ATPase PAN-20S proteasome complex, via the docking of the C-termini of PAN into the intersubunit pockets in the alpha-rings, triggers opening of the gate for substrate entry. Interconversion between the open-gate and close-gate conformations leads to a dynamic regulation of the 20S proteasome proteolysis activity. Component of the proteasome core, a large protease complex with broad specificity involved in protein degradation. This is Proteasome subunit beta from Methanospirillum hungatei JF-1 (strain ATCC 27890 / DSM 864 / NBRC 100397 / JF-1).